The sequence spans 457 residues: uncharacterized protein (457 aa).

A run of 12 helical transmembrane segments spans residues Val18 to Val38, Gly44 to Val64, Met101 to Ile121, Ile158 to Ile178, Leu188 to Gly208, Leu228 to Ile248, Ile273 to Pro293, Asn294 to Gly314, Phe316 to Ile336, Ala355 to Asp375, Ser396 to Leu416, and Ile433 to Ile453.

The protein belongs to the sodium:neurotransmitter symporter (SNF) (TC 2.A.22) family.

The protein localises to the cell membrane. Its function is as follows. Putative sodium-dependent transporter. This is an uncharacterized protein from Haemophilus influenzae (strain ATCC 51907 / DSM 11121 / KW20 / Rd).